The following is a 444-amino-acid chain: Glucarate dehydratase (444 aa).

The substrate site is built by His30, Thr101, Tyr148, and Lys203. Lys205 functions as the Proton acceptor in the catalytic mechanism. Asp233, Glu264, and Asn287 together coordinate Mg(2+). 233 to 235 provides a ligand contact to substrate; sequence DPN. Substrate contacts are provided by residues Asn287, 337 to 339, His366, and Arg420; that span reads HSN. The active-site Proton acceptor is His337.

This sequence belongs to the mandelate racemase/muconate lactonizing enzyme family. GlucD subfamily. The cofactor is Mg(2+).

It catalyses the reaction D-glucarate = 5-dehydro-4-deoxy-D-glucarate + H2O. It functions in the pathway carbohydrate acid metabolism; D-glucarate degradation; 2,5-dioxopentanoate from D-glucarate: step 1/2. Catalyzes the dehydration of glucarate to 5-keto-4-deoxy-D-glucarate (5-kdGluc). In Acinetobacter baylyi (strain ATCC 33305 / BD413 / ADP1), this protein is Glucarate dehydratase (gudD).